The primary structure comprises 128 residues: UPF0102 protein Rfer_3873 (128 aa).

Residues 1 to 15 are compositionally biased toward polar residues; it reads MAIPQIKTQVGTSKQ. Residues 1–20 are disordered; sequence MAIPQIKTQVGTSKQAGDAA.

Belongs to the UPF0102 family.

This is UPF0102 protein Rfer_3873 from Albidiferax ferrireducens (strain ATCC BAA-621 / DSM 15236 / T118) (Rhodoferax ferrireducens).